Consider the following 708-residue polypeptide: Leukotoxin translocation ATP-binding protein LktB (708 aa).

One can recognise a Peptidase C39 domain in the interval 1-126 (MEANHQRNDL…ACYQGQLILV (126 aa)). The region spanning 155–437 (FLETLIVSIF…LAQLWQDFQQ (283 aa)) is the ABC transmembrane type-1 domain. A run of 5 helical transmembrane segments spans residues 159–179 (LIVSIFLQIFALITPLFFQVV), 192–212 (LNIITVALAIVIIFEIVLSGL), 270–290 (ALTSVLDLLFSFIFFAVMWYY), 296–316 (LVILGSLPCYILWSIFISPIL), and 389–409 (VMVINLWLGAHLVISGDLSIG). The region spanning 469–704 (ISFKNIRFRY…SNGLYSYLHQ (236 aa)) is the ABC transporter domain. 503-510 (GRSGSGKS) provides a ligand contact to ATP.

This sequence belongs to the ABC transporter superfamily. Protein-1 exporter (TC 3.A.1.109) family. In terms of assembly, homodimer.

The protein localises to the cell inner membrane. The catalysed reaction is ATP + H2O + proteinSide 1 = ADP + phosphate + proteinSide 2.. Functionally, part of the ABC transporter complex LktBD involved in leukotoxin export. Transmembrane domains (TMD) form a pore in the inner membrane and the ATP-binding domain (NBD) is responsible for energy generation. The protein is Leukotoxin translocation ATP-binding protein LktB (lktB) of Mannheimia haemolytica (Pasteurella haemolytica).